A 22-amino-acid polypeptide reads, in one-letter code: 65 kDa membrane protein (22 aa).

Positions 1–22 are disordered; that stretch reads AAKPLDKSSSSLHHGYSKVHVP.

It is found in the cell membrane. In terms of biological role, binds various plasma and ECM-proteins. In Staphylococcus aureus, this protein is 65 kDa membrane protein.